The sequence spans 188 residues: dCTP deaminase (188 aa).

DCTP contacts are provided by residues 111 to 116 (KSTYAR), 135 to 137 (TLE), Q156, Y170, and Q180. The active-site Proton donor/acceptor is the E137.

Belongs to the dCTP deaminase family. In terms of assembly, homotrimer.

The catalysed reaction is dCTP + H2O + H(+) = dUTP + NH4(+). It functions in the pathway pyrimidine metabolism; dUMP biosynthesis; dUMP from dCTP (dUTP route): step 1/2. Functionally, catalyzes the deamination of dCTP to dUTP. This chain is dCTP deaminase, found in Azoarcus sp. (strain BH72).